We begin with the raw amino-acid sequence, 147 residues long: MAWEGTYERLFFLALGSSYHVPSLANNIMNFLEGARLYKKNTTYVATLIYEFIILNDASMTPDVKCFWLPVKLPHFLLLSELYSIIEKYKLAKVYYNRGTYDVHTVSANSLVISGSMPTGIIIGSSSPLDYVGVQVNRQLEMDLPIE.

This is an uncharacterized protein from Saccharomyces cerevisiae (strain ATCC 204508 / S288c) (Baker's yeast).